The following is a 537-amino-acid chain: CTP synthase (537 aa).

The tract at residues 1-267 (MAKFVFVTGG…ADIVLDKLGI (267 aa)) is amidoligase domain. A CTP-binding site is contributed by Ser13. Ser13 contributes to the UTP binding site. Position 14–19 (14–19 (SLGKGI)) interacts with ATP. Tyr54 is a binding site for L-glutamine. Asp71 provides a ligand contact to ATP. The Mg(2+) site is built by Asp71 and Glu141. CTP contacts are provided by residues 148-150 (DIE), 188-193 (KTKPTQ), and Lys224. UTP is bound by residues 188–193 (KTKPTQ) and Lys224. Positions 292–534 (TIALVGKYVS…IGAARKYKES (243 aa)) constitute a Glutamine amidotransferase type-1 domain. Gly354 is an L-glutamine binding site. Cys381 (nucleophile; for glutamine hydrolysis) is an active-site residue. L-glutamine-binding positions include 382-385 (LGMQ), Glu405, and Arg462. Residues His507 and Glu509 contribute to the active site.

This sequence belongs to the CTP synthase family. Homotetramer.

The enzyme catalyses UTP + L-glutamine + ATP + H2O = CTP + L-glutamate + ADP + phosphate + 2 H(+). It catalyses the reaction L-glutamine + H2O = L-glutamate + NH4(+). It carries out the reaction UTP + NH4(+) + ATP = CTP + ADP + phosphate + 2 H(+). Its pathway is pyrimidine metabolism; CTP biosynthesis via de novo pathway; CTP from UDP: step 2/2. Its activity is regulated as follows. Allosterically activated by GTP, when glutamine is the substrate; GTP has no effect on the reaction when ammonia is the substrate. The allosteric effector GTP functions by stabilizing the protein conformation that binds the tetrahedral intermediate(s) formed during glutamine hydrolysis. Inhibited by the product CTP, via allosteric rather than competitive inhibition. In terms of biological role, catalyzes the ATP-dependent amination of UTP to CTP with either L-glutamine or ammonia as the source of nitrogen. Regulates intracellular CTP levels through interactions with the four ribonucleotide triphosphates. This is CTP synthase from Pelotomaculum thermopropionicum (strain DSM 13744 / JCM 10971 / SI).